Reading from the N-terminus, the 860-residue chain is Leucine--tRNA ligase (860 aa).

The short motif at 42–52 (PYPSGRLHMGH) is the 'HIGH' region element. Residues 619 to 623 (KMSKS) carry the 'KMSKS' region motif. An ATP-binding site is contributed by K622.

It belongs to the class-I aminoacyl-tRNA synthetase family.

It localises to the cytoplasm. The catalysed reaction is tRNA(Leu) + L-leucine + ATP = L-leucyl-tRNA(Leu) + AMP + diphosphate. The protein is Leucine--tRNA ligase of Escherichia coli (strain K12 / MC4100 / BW2952).